Consider the following 261-residue polypeptide: Tryptophan synthase alpha chain (261 aa).

Catalysis depends on proton acceptor residues Glu-49 and Asp-60.

This sequence belongs to the TrpA family. In terms of assembly, tetramer of two alpha and two beta chains.

It catalyses the reaction (1S,2R)-1-C-(indol-3-yl)glycerol 3-phosphate + L-serine = D-glyceraldehyde 3-phosphate + L-tryptophan + H2O. It functions in the pathway amino-acid biosynthesis; L-tryptophan biosynthesis; L-tryptophan from chorismate: step 5/5. Functionally, the alpha subunit is responsible for the aldol cleavage of indoleglycerol phosphate to indole and glyceraldehyde 3-phosphate. The sequence is that of Tryptophan synthase alpha chain from Roseiflexus castenholzii (strain DSM 13941 / HLO8).